The sequence spans 563 residues: F-box/kelch-repeat protein At5g42350 (563 aa).

The F-box domain maps to 129–175 (YRKHVYLPDDILEMCLMRLPLTSLLNAHLVCKKWQSMANTQRFLQMR). Kelch repeat units lie at residues 184–231 (WLFL…SIHE), 232–282 (EIYI…ATEV), and 355–402 (VLIA…IICN).

This chain is F-box/kelch-repeat protein At5g42350, found in Arabidopsis thaliana (Mouse-ear cress).